The sequence spans 337 residues: RNA 3'-terminal phosphate cyclase (337 aa).

ATP-binding positions include Gln101 and 282–285 (HMSD). His306 functions as the Tele-AMP-histidine intermediate in the catalytic mechanism.

This sequence belongs to the RNA 3'-terminal cyclase family. Type 1 subfamily.

It localises to the cytoplasm. It catalyses the reaction a 3'-end 3'-phospho-ribonucleotide-RNA + ATP = a 3'-end 2',3'-cyclophospho-ribonucleotide-RNA + AMP + diphosphate. Catalyzes the conversion of 3'-phosphate to a 2',3'-cyclic phosphodiester at the end of RNA. The mechanism of action of the enzyme occurs in 3 steps: (A) adenylation of the enzyme by ATP; (B) transfer of adenylate to an RNA-N3'P to produce RNA-N3'PP5'A; (C) and attack of the adjacent 2'-hydroxyl on the 3'-phosphorus in the diester linkage to produce the cyclic end product. The biological role of this enzyme is unknown but it is likely to function in some aspects of cellular RNA processing. The polypeptide is RNA 3'-terminal phosphate cyclase (Saccharolobus islandicus (strain M.16.27) (Sulfolobus islandicus)).